We begin with the raw amino-acid sequence, 548 residues long: Probable 2,3-bisphosphoglycerate-independent phosphoglycerate mutase (548 aa).

Residues Asp-20 and Ser-73 each contribute to the Mn(2+) site. Ser-73 functions as the Phosphoserine intermediate in the catalytic mechanism. Residues His-134, 164-165 (RD), Arg-200, Arg-207, 279-282 (RGDR), and Lys-354 contribute to the substrate site. Mn(2+) contacts are provided by Asp-422, His-426, Asp-463, His-464, and His-493.

Belongs to the BPG-independent phosphoglycerate mutase family. Monomer. Mn(2+) is required as a cofactor.

It carries out the reaction (2R)-2-phosphoglycerate = (2R)-3-phosphoglycerate. It functions in the pathway carbohydrate degradation; glycolysis; pyruvate from D-glyceraldehyde 3-phosphate: step 3/5. Catalyzes the interconversion of 2-phosphoglycerate and 3-phosphoglycerate. In Leptospira interrogans serogroup Icterohaemorrhagiae serovar Lai (strain 56601), this protein is Probable 2,3-bisphosphoglycerate-independent phosphoglycerate mutase (gpmI).